The sequence spans 337 residues: tRNA N6-adenosine threonylcarbamoyltransferase (337 aa).

Residues His111 and His115 each coordinate Fe cation. Substrate-binding positions include 134 to 138 (LVSGG), Asp167, Gly180, and Asn272. Residue Asp300 coordinates Fe cation.

Belongs to the KAE1 / TsaD family. Fe(2+) is required as a cofactor.

The protein resides in the cytoplasm. The catalysed reaction is L-threonylcarbamoyladenylate + adenosine(37) in tRNA = N(6)-L-threonylcarbamoyladenosine(37) in tRNA + AMP + H(+). Its function is as follows. Required for the formation of a threonylcarbamoyl group on adenosine at position 37 (t(6)A37) in tRNAs that read codons beginning with adenine. Is involved in the transfer of the threonylcarbamoyl moiety of threonylcarbamoyl-AMP (TC-AMP) to the N6 group of A37, together with TsaE and TsaB. TsaD likely plays a direct catalytic role in this reaction. The sequence is that of tRNA N6-adenosine threonylcarbamoyltransferase from Escherichia coli O157:H7.